We begin with the raw amino-acid sequence, 66 residues long: Large ribosomal subunit protein bL33c (66 aa).

Belongs to the bacterial ribosomal protein bL33 family.

It is found in the plastid. It localises to the chloroplast. This Cucumis sativus (Cucumber) protein is Large ribosomal subunit protein bL33c.